A 194-amino-acid polypeptide reads, in one-letter code: Imidazoleglycerol-phosphate dehydratase (194 aa).

The protein belongs to the imidazoleglycerol-phosphate dehydratase family.

Its subcellular location is the cytoplasm. The enzyme catalyses D-erythro-1-(imidazol-4-yl)glycerol 3-phosphate = 3-(imidazol-4-yl)-2-oxopropyl phosphate + H2O. It functions in the pathway amino-acid biosynthesis; L-histidine biosynthesis; L-histidine from 5-phospho-alpha-D-ribose 1-diphosphate: step 6/9. In Bacillus pumilus (strain SAFR-032), this protein is Imidazoleglycerol-phosphate dehydratase.